The chain runs to 624 residues: MQPDPRPSGAGACSRFLPLRSQCPEGAGDAVMYASTECKAEVTPSQHGNRTFSYTLEDHTKQAFGIMNELRLSQQLCDVTLQVKYQDAPAAQFMAHKVVLASSSPVFKAMFTNGLREQGMEVVSIEGIHPKVMERLIEFAYTASISMGEKCVLHVMNGAVMYQIDSVVRACSDFLVQQLDPSNAIGIANFAEQIGCVELHQRAREYIYMHFGEVTKQEEFFNLSHCQLVTLISRDDLNVRCESEVFHACINWVKYDCEQRRFYVQALLRAVRCHSLTPNFLQMQLQKCEILQSDSRCKDYLVKIFEELTLHKPTQVMPCRAPKVGRLIYTAGGYFRQSLSYLEAYNPSDGTWLRLADLQVPRSGLAGCVVGGLLYAVGGRNNSPDGNTDSSALDCYNPMTNQWSPCAPMSVPRNRIGVGVIDGHIYAVGGSHGCIHHNSVERYEPERDEWHLVAPMLTRRIGVGVAVLNRLLYAVGGFDGTNRLNSAECYYPERNEWRMITAMNTIRSGAGVCVLHNCIYAAGGYDGQDQLNSVERYDVETETWTFVAPMKHRRSALGITVHQGRIYVLGGYDGHTFLDSVECYDPDTDTWSEVTRMTSGRSGVGVAVTMEPCRKQIDQQNCTC.

Cysteine 38 carries the S-(2-succinyl)cysteine modification. A BTB domain is found at 77 to 149; the sequence is CDVTLQVKYQ…AYTASISMGE (73 aa). Arginine 135 is covalently cross-linked (N5-[4-(S-L-cysteinyl)-5-methyl-1H-imidazol-2-yl]-L-ornithine (Arg-Cys) (interchain with C-151 in KEAP1)). Cysteine 151 and cysteine 241 each carry S-(2-succinyl)cysteine. The residue at position 151 (cysteine 151) is an S-(2,3-dicarboxypropyl)cysteine; alternate. At cysteine 151 the chain carries S-nitrosocysteine; alternate. Residue cysteine 151 forms an N5-[4-(S-L-cysteinyl)-5-methyl-1H-imidazol-2-yl]-L-ornithine (Cys-Arg) (interchain with R-135 in KEAP1) linkage. In terms of domain architecture, BACK spans 184-286; sequence AIGIANFAEQ…TPNFLQMQLQ (103 aa). 2 positions are modified to S-(2,3-dicarboxypropyl)cysteine: cysteine 257 and cysteine 273. An S-(2-succinyl)cysteine mark is found at cysteine 288 and cysteine 319. The residue at position 288 (cysteine 288) is an S-(2,3-dicarboxypropyl)cysteine; alternate. 6 Kelch repeats span residues 327–372, 373–423, 424–470, 471–517, 518–564, and 565–611; these read LIYT…VVGG, LLYA…VIDG, HIYA…VLNR, LLYA…VLHN, CIYA…VHQG, and RIYV…VTME. Cysteine 434 is subject to S-cGMP-cysteine. The residue at position 613 (cysteine 613) is an S-(2-succinyl)cysteine.

It belongs to the KEAP1 family. In terms of assembly, component of the BCR(KEAP1) E3 ubiquitin ligase complex, at least composed of 2 molecules of CUL3, 2 molecules of KEAP1, and RBX1. Interacts with NFE2L2/NRF2; the interaction is direct. Forms a ternary complex with NFE2L2/NRF2 and PGAM5. Interacts with (phosphorylated) SQSTM1/p62; the interaction is direct and inactivates the BCR(KEAP1) complex by sequestering it in inclusion bodies, promoting its degradation. Interacts with NFE2L1. Interacts with BPTF and PTMA. Interacts with MAP1LC3B. Interacts indirectly with ENC1. Interacts with SESN1 and SESN2. Interacts with HSP90AA1 and HSP90AB1. Interacts with PGCKA1; this interaction prevents the ubiquitination of KEAP1 by TRIM25, thus protecting KEAP1 from degradation. Non-enzymatic covalent modifications of reactive cysteines by electrophile metabolites inactivate the BCR(KEAP1) complex. Accumulation of fumarate promotes the formation of cysteine S-succination (S-(2-succinyl)cysteine), leading to inactivate the BCR(KEAP1) complex and promote NFE2L2/NRF2 nuclear accumulation and activation. Nitric oxide-dependent 8-Nitro-cGMP formation promotes cysteine guanylation (S-cGMP-cysteine), leading to NFE2L2/NRF2 nuclear accumulation and activation. Itaconate, an anti-inflammatory metabolite generated in response to lipopolysaccharide, alkylates cysteines, activating NFE2L2/NRF2. Methylglyoxal, a reactive metabolite that accumulates when the glycolytic enzyme PGK1 is inhibited, promotes formation of a methylimidazole cross-link between proximal Cys-151 and Arg-135 on another KEAP1 molecule, resulting in an inactive dimer that inactivates the BCR(KEAP1) complex. Post-translationally, degraded via a proteasomal-independent process during selective autophagy: interaction with phosphorylated SQSTM1/p62 sequesters KEAP1 in inclusion bodies, leading to its degradation. In terms of processing, auto-ubiquitinated by the BCR(KEAP1) complex. Quinone-induced oxidative stress, but not sulforaphane, increases its ubiquitination. Ubiquitination and subsequent degradation is most pronounced following prolonged exposure of cells to oxidative stress, particularly in glutathione-deficient cells that are highly susceptible to oxidative stress. Deubiquitinated by USP25; leading to stabilization. Ubiquitinated by TRIM25; leading to degradation upon ER stress.

It is found in the cytoplasm. It localises to the nucleus. Its pathway is protein modification; protein ubiquitination. Ubiquitin ligase activity of the BCR(KEAP1) complex is inhibited by oxidative stress and electrophile metabolites such as sulforaphane. Electrophile metabolites react with reactive cysteine residues in KEAP1 and trigger non-enzymatic covalent modifications of these cysteine residues, leading to inactivate the ubiquitin ligase activity of the BCR(KEAP1) complex. Selective autophagy also inactivates the BCR(KEAP1) complex via interaction between KEAP1 and SQSTM1/p62, which sequesters the complex in inclusion bodies and promotes its degradation. In terms of biological role, substrate-specific adapter of a BCR (BTB-CUL3-RBX1) E3 ubiquitin ligase complex that regulates the response to oxidative stress by targeting NFE2L2/NRF2 for ubiquitination. KEAP1 acts as a key sensor of oxidative and electrophilic stress: in normal conditions, the BCR(KEAP1) complex mediates ubiquitination and degradation of NFE2L2/NRF2, a transcription factor regulating expression of many cytoprotective genes. In response to oxidative stress, different electrophile metabolites trigger non-enzymatic covalent modifications of highly reactive cysteine residues in KEAP1, leading to inactivate the ubiquitin ligase activity of the BCR(KEAP1) complex, promoting NFE2L2/NRF2 nuclear accumulation and expression of phase II detoxifying enzymes. In response to selective autophagy, KEAP1 is sequestered in inclusion bodies following its interaction with SQSTM1/p62, leading to inactivation of the BCR(KEAP1) complex and activation of NFE2L2/NRF2. The BCR(KEAP1) complex also mediates ubiquitination of SQSTM1/p62, increasing SQSTM1/p62 sequestering activity and degradation. The BCR(KEAP1) complex also targets BPTF and PGAM5 for ubiquitination and degradation by the proteasome. In Pongo abelii (Sumatran orangutan), this protein is Kelch-like ECH-associated protein 1.